The sequence spans 300 residues: Acetylglutamate kinase (300 aa).

Substrate-binding positions include 73–74 (GG), Arg-95, and Asn-197.

This sequence belongs to the acetylglutamate kinase family. ArgB subfamily.

It is found in the cytoplasm. It catalyses the reaction N-acetyl-L-glutamate + ATP = N-acetyl-L-glutamyl 5-phosphate + ADP. It functions in the pathway amino-acid biosynthesis; L-arginine biosynthesis; N(2)-acetyl-L-ornithine from L-glutamate: step 2/4. Catalyzes the ATP-dependent phosphorylation of N-acetyl-L-glutamate. The chain is Acetylglutamate kinase from Bordetella bronchiseptica (strain ATCC BAA-588 / NCTC 13252 / RB50) (Alcaligenes bronchisepticus).